The chain runs to 905 residues: DNA mismatch repair protein MutS (905 aa).

The tract at residues 389 to 410 is disordered; it reads ERPANPEGTYPTDAETSGDTLP. ATP is bound at residue 638–645; the sequence is GPNMAGKS. A disordered region spans residues 826–847; the sequence is RDAARGTNSAPSRQTLPGLDLP. Polar residues predominate over residues 831–840; that stretch reads GTNSAPSRQT.

Belongs to the DNA mismatch repair MutS family.

Its function is as follows. This protein is involved in the repair of mismatches in DNA. It is possible that it carries out the mismatch recognition step. This protein has a weak ATPase activity. In Nitratidesulfovibrio vulgaris (strain ATCC 29579 / DSM 644 / CCUG 34227 / NCIMB 8303 / VKM B-1760 / Hildenborough) (Desulfovibrio vulgaris), this protein is DNA mismatch repair protein MutS.